Reading from the N-terminus, the 573-residue chain is Delta 8-(E)-sphingolipid desaturase (573 aa).

Positions 2–77 (SRVLSRRDIA…FKIWKIGRID (76 aa)) constitute a Cytochrome b5 heme-binding domain. Heme-binding residues include H37 and H60. The helical transmembrane segment at 228 to 248 (LFGISFYLLSLKWFAISAICL) threads the bilayer. The Histidine box-1 motif lies at 260–264 (HDAGH). A helical transmembrane segment spans residues 273 to 293 (VDNIIGMTVASWIGGLSLGWW). A Histidine box-2 motif is present at residues 297–301 (HDVHH). Helical transmembrane passes span 353 to 372 (YLYY…LSWM), 393 to 413 (LAEL…KQMP), and 422 to 442 (VMIS…SHFA). Residues 481–485 (QVIHH) carry the Histidine box-3 motif.

This sequence belongs to the fatty acid desaturase type 1 family.

Its subcellular location is the membrane. The enzyme catalyses an N-acylsphing-4-enine + 2 Fe(II)-[cytochrome b5] + O2 + 2 H(+) = a (4E,8E)-4-sphinga-4,8-dienine ceramide + 2 Fe(III)-[cytochrome b5] + 2 H2O. Its pathway is lipid metabolism; sphingolipid metabolism. In terms of biological role, delta(8)-fatty-acid desaturase which introduces a double bond at the 8-position in the long-chain base (LCB) of ceramides. Required for the formation of the di-unsaturated sphingoid base (E,E)-sphinga-4,8-dienine during glucosylceramide (GluCer) biosynthesis. The sequence is that of Delta 8-(E)-sphingolipid desaturase from Kluyveromyces lactis (Yeast).